The primary structure comprises 264 residues: Phosphonoacetaldehyde hydrolase (264 aa).

Asp9 acts as the Nucleophile in catalysis. Mg(2+) is bound by residues Asp9 and Ala11. Lys50 serves as the catalytic Schiff-base intermediate with substrate. Asp183 is a Mg(2+) binding site.

The protein belongs to the HAD-like hydrolase superfamily. PhnX family. As to quaternary structure, homodimer. It depends on Mg(2+) as a cofactor.

It catalyses the reaction phosphonoacetaldehyde + H2O = acetaldehyde + phosphate + H(+). Functionally, involved in phosphonate degradation. The chain is Phosphonoacetaldehyde hydrolase from Bacillus thuringiensis (strain Al Hakam).